A 98-amino-acid polypeptide reads, in one-letter code: Gas vesicle protein A (98 aa).

This sequence belongs to the gas vesicle GvpA family. The gas vesicle shell is 2 nm thick and consists of a single layer of this protein. It forms helical ribs nearly perpendicular to the long axis of the vesicle.

Its subcellular location is the gas vesicle shell. Functionally, gas vesicles are hollow, gas filled proteinaceous nanostructures found in some microorganisms. During planktonic growth they allow positioning of the organism at a favorable depth for light or nutrient acquisition. GvpA forms the protein shell. The sequence is that of Gas vesicle protein A from Koribacter versatilis (strain Ellin345).